Here is a 606-residue protein sequence, read N- to C-terminus: Sodium-independent sulfate anion transporter (606 aa).

The Extracellular segment spans residues 1-51 (MPSSVTALGQARSSGPGMAPSACCCSPAALQRRLPILAWLPSYSLQWLKMD). The chain crosses the membrane as a helical span at residues 52–72 (FVAGLSVGLTAIPQALAYAEV). Alanine 73 is a topological domain (cytoplasmic). A helical membrane pass occupies residues 74–94 (GLPPQYGLYSAFMGCFVYFFL). The Extracellular segment spans residues 95–100 (GTSRDV). Residues 101–117 (TLGPTAIMSLLVSFYTF) form a helical membrane-spanning segment. At 118 to 119 (HE) the chain is on the cytoplasmic side. The helical transmembrane segment at 120–140 (PAYAVLLAFLSGCIQLAMGVL) threads the bilayer. At 141–147 (RLGFLLD) the chain is on the extracellular side. A helical membrane pass occupies residues 148 to 168 (FISYPVIKGFTSAAAVTIGFG). Residues 169-197 (QIKNLLGLQNIPRPFFLQVYHTFLRIAET) lie on the Cytoplasmic side of the membrane. The chain crosses the membrane as a helical span at residues 198 to 218 (RVGDAVLGLVCMLLLLVLKLM). Residues 219 to 250 (RDHVPPVHPEMPPGVRLSRGLVWAATTARNAL) lie on the Extracellular side of the membrane. The chain crosses the membrane as a helical span at residues 251–271 (VVSFAALVAYSFEVTGYQPFI). Residues 272–307 (LTGETAEGLPPVRIPPFSVTTANGTISFTEMVQDMG) lie on the Cytoplasmic side of the membrane. A helical transmembrane segment spans residues 308–328 (AGLAVVPLMGLLESIAVAKAF). The Extracellular segment spans residues 329-341 (ASQNNYRIDANQE). Residues 342–362 (LLAIGLTNMLGSLVSSYPVTG) traverse the membrane as a helical segment. The Cytoplasmic portion of the chain corresponds to 363–374 (SFGRTAVNAQSG). The helical transmembrane segment at 375 to 395 (VCTPAGGLVTGVLVLLSLDYL) threads the bilayer. At 396-398 (TSL) the chain is on the extracellular side. A helical membrane pass occupies residues 399–419 (FYYIPKSALAAVIIMAVAPLF). Topologically, residues 420 to 441 (DTKIFRTLWRVKRLDLLPLCVT) are cytoplasmic. Residues 442–462 (FLLCFWEVQYGILAGALVSLL) traverse the membrane as a helical segment. Residues 463-606 (MLLHSAARPE…LDQKVALLKA (144 aa)) are Extracellular-facing. The STAS domain maps to 470-584 (RPETKVSEGP…EAEKHLRQEP (115 aa)).

This sequence belongs to the SLC26A/SulP transporter (TC 2.A.53) family. As to expression, detected in all tissues tested with highest expression observed in brain, kidney, HEVEC and placenta and lowest in pancreas, skeletal muscle, liver, lung and heart.

Its subcellular location is the cell membrane. It localises to the lysosome membrane. It is found in the apical cell membrane. The protein localises to the basolateral cell membrane. The enzyme catalyses hydrogencarbonate(in) + chloride(out) = hydrogencarbonate(out) + chloride(in). It carries out the reaction sulfate(in) + H(+)(in) = sulfate(out) + H(+)(out). It catalyses the reaction oxalate(in) + chloride(out) = oxalate(out) + chloride(in). Functionally, sodium-independent anion exchanger mediating bicarbonate, chloride, sulfate and oxalate transport. Exhibits sodium-independent sulfate anion transporter activity that may cooperate with SLC26A2 to mediate DIDS-sensitive sulfate uptake into high endothelial venules endothelial cells (HEVEC). In the kidney, mediates chloride-bicarbonate exchange, facilitating V-ATPase-mediated acid secretion. May function as a chloride channel, playing an important role in moderating chloride homeostasis and neuronal activity in the cerebellum. This Homo sapiens (Human) protein is Sodium-independent sulfate anion transporter.